Reading from the N-terminus, the 380-residue chain is Cytochrome b (380 aa).

Transmembrane regions (helical) follow at residues 33 to 53 (FGSLLGLCLITQILTGLFLAM), 77 to 98 (WLIRNIHANGASFFFICIYMHI), 113 to 133 (WNIGVVLLLLVMMTAFVGYVL), and 178 to 198 (FFAFHFLLPFIIAAATVIHLL). H83 and H97 together coordinate heme b. The heme b site is built by H182 and H196. A ubiquinone is bound at residue H201. 4 helical membrane passes run 226-246 (YKDLLGFVIMLLALTLLALFS), 288-308 (LGGVLALLFSILVLMVVPLLH), 320-340 (ITQFLFWTLVADMIILTWIGG), and 347-367 (FIIIGQIASVLYFALFLVLFP).

Belongs to the cytochrome b family. The cytochrome bc1 complex contains 3 respiratory subunits (MT-CYB, CYC1 and UQCRFS1), 2 core proteins (UQCRC1 and UQCRC2) and probably 6 low-molecular weight proteins. It depends on heme b as a cofactor.

It is found in the mitochondrion inner membrane. Its function is as follows. Component of the ubiquinol-cytochrome c reductase complex (complex III or cytochrome b-c1 complex) that is part of the mitochondrial respiratory chain. The b-c1 complex mediates electron transfer from ubiquinol to cytochrome c. Contributes to the generation of a proton gradient across the mitochondrial membrane that is then used for ATP synthesis. This is Cytochrome b (mt-cyb) from Carassius auratus (Goldfish).